A 143-amino-acid chain; its full sequence is Hemoglobin subunit alpha (143 aa).

The region spanning 2–143 is the Globin domain; the sequence is RFSQDDEVLI…IVHVLISLYR (142 aa). Histidine 60 provides a ligand contact to O2. Histidine 89 is a binding site for heme b.

It belongs to the globin family. In terms of assembly, heterotetramer of two alpha chains and two beta chains. Red blood cells.

Involved in oxygen transport from the lung to the various peripheral tissues. The sequence is that of Hemoglobin subunit alpha (HBA) from Lepidosiren paradoxus (South American lungfish).